Consider the following 372-residue polypeptide: Alanine dehydrogenase (372 aa).

Residues arginine 15 and lysine 75 each contribute to the substrate site. The Proton donor/acceptor role is filled by histidine 96. Residues serine 134, isoleucine 178–alanine 179, aspartate 198, serine 220, valine 239–leucine 240, isoleucine 267–aspartate 270, arginine 280, and valine 299–methionine 302 contribute to the NAD(+) site. Residue aspartate 270 is the Proton donor/acceptor of the active site.

The protein belongs to the AlaDH/PNT family. As to quaternary structure, homohexamer.

The protein resides in the cytoplasm. It carries out the reaction L-alanine + NAD(+) + H2O = pyruvate + NH4(+) + NADH + H(+). It functions in the pathway amino-acid degradation; L-alanine degradation via dehydrogenase pathway; NH(3) and pyruvate from L-alanine: step 1/1. With respect to regulation, inhibited by p-chloromercuribenzoate and HgCl(2) and by Cu(2+) and Pb(2+) salts, unaffected by amino acids such as D-alanine and beta-alanine or by nucleotides or nucleosides. Its function is as follows. Catalyzes the reversible reductive amination of pyruvate to L-alanine. Prefers L-alanine for oxidative deamination, other substrates are poorly reactive. In the other direction 2-oxobutyrate is almost as reactive as pyruvate. Ammonia is the sole amino donor for the reductive amination of pyruvate, NADPH is inert. Reductive amination proceeds through a sequential, ordered ternary-binary mechanism, where NADH binds first followed by ammonia and pyruvate; the products are released in the order L-alanine and NAD(+). A key factor in the assimilation of L-alanine as an energy source via the tricarboxylic acid cycle during sporulation. The protein is Alanine dehydrogenase (ald) of Lysinibacillus sphaericus (Bacillus sphaericus).